The chain runs to 306 residues: tRNA-cytidine(32) 2-sulfurtransferase (306 aa).

The tract at residues 1 to 25 is disordered; it reads MSAVISLPDPQPRAARDPRVAEREQ. Basic and acidic residues predominate over residues 14-25; that stretch reads AARDPRVAEREQ. The PP-loop motif motif lies at 57 to 62; it reads SGGKDS. [4Fe-4S] cluster is bound by residues Cys132, Cys135, and Cys223. The disordered stretch occupies residues 286 to 306; that stretch reads AHAWLAGSPADADADPETPTV. Residues 297 to 306 are compositionally biased toward acidic residues; that stretch reads ADADPETPTV.

Belongs to the TtcA family. As to quaternary structure, homodimer. It depends on Mg(2+) as a cofactor. Requires [4Fe-4S] cluster as cofactor.

It is found in the cytoplasm. It catalyses the reaction cytidine(32) in tRNA + S-sulfanyl-L-cysteinyl-[cysteine desulfurase] + AH2 + ATP = 2-thiocytidine(32) in tRNA + L-cysteinyl-[cysteine desulfurase] + A + AMP + diphosphate + H(+). The protein operates within tRNA modification. In terms of biological role, catalyzes the ATP-dependent 2-thiolation of cytidine in position 32 of tRNA, to form 2-thiocytidine (s(2)C32). The sulfur atoms are provided by the cysteine/cysteine desulfurase (IscS) system. The chain is tRNA-cytidine(32) 2-sulfurtransferase from Stenotrophomonas maltophilia (strain K279a).